The following is a 573-amino-acid chain: SHC-transforming protein 2 (573 aa).

Residues 125-307 (LGPGVSYIVR…TGLEESAWGD (183 aa)) form the PID domain. One can recognise an SH2 domain in the interval 478 to 569 (WYHGRMSRRA…ESELHLRGVV (92 aa)).

In terms of assembly, interacts with the Trk receptors in a phosphotyrosine-dependent manner and MEGF12. Once activated, binds to GRB2. Phosphorylated on tyrosine by the Trk receptors.

Its function is as follows. Signaling adapter that couples activated growth factor receptors to signaling pathway in neurons. Involved in the signal transduction pathways of neurotrophin-activated Trk receptors in cortical neurons. The chain is SHC-transforming protein 2 (Shc2) from Rattus norvegicus (Rat).